Reading from the N-terminus, the 380-residue chain is Erythronate-4-phosphate dehydrogenase (380 aa).

Ser45 and Thr66 together coordinate substrate. Asp146 lines the NAD(+) pocket. The active site involves Arg207. Residue Asp232 participates in NAD(+) binding. Glu237 is a catalytic residue. Catalysis depends on His254, which acts as the Proton donor. Gly257 is an NAD(+) binding site. Residue Tyr258 coordinates substrate.

It belongs to the D-isomer specific 2-hydroxyacid dehydrogenase family. PdxB subfamily. As to quaternary structure, homodimer.

The protein resides in the cytoplasm. It carries out the reaction 4-phospho-D-erythronate + NAD(+) = (R)-3-hydroxy-2-oxo-4-phosphooxybutanoate + NADH + H(+). It functions in the pathway cofactor biosynthesis; pyridoxine 5'-phosphate biosynthesis; pyridoxine 5'-phosphate from D-erythrose 4-phosphate: step 2/5. In terms of biological role, catalyzes the oxidation of erythronate-4-phosphate to 3-hydroxy-2-oxo-4-phosphonooxybutanoate. This is Erythronate-4-phosphate dehydrogenase from Marinomonas sp. (strain MWYL1).